We begin with the raw amino-acid sequence, 327 residues long: Eukaryotic translation initiation factor 3 subunit I (327 aa).

6 WD repeats span residues 8-49 (GHDR…GTYD), 51-91 (HNGV…NSVS), 144-183 (SLQTQANSCVWTHLDDTVCVGNEKGNVHQYDIRKGDDIVN), 188-227 (AHKFQINDMQMSTDESFLITASKDKTARLFDARTLDCLKT), 229-268 (KAERPVNSAAISPIRDHVILGGGEEAMKVTQTTAASGHFE), and 285-324 (GHFGPINTLAFHPGGNCVVSGGEDGYVRIQEFDTDYLKFD).

This sequence belongs to the eIF-3 subunit I family. In terms of assembly, component of the eukaryotic translation initiation factor 3 (eIF-3) complex.

It is found in the cytoplasm. Component of the eukaryotic translation initiation factor 3 (eIF-3) complex, which is involved in protein synthesis of a specialized repertoire of mRNAs and, together with other initiation factors, stimulates binding of mRNA and methionyl-tRNAi to the 40S ribosome. The eIF-3 complex specifically targets and initiates translation of a subset of mRNAs involved in cell proliferation. The protein is Eukaryotic translation initiation factor 3 subunit I of Brugia malayi (Filarial nematode worm).